The sequence spans 341 residues: L-threonine 3-dehydrogenase (341 aa).

Position 38 (Cys-38) interacts with Zn(2+). Residues Thr-40 and His-43 each act as charge relay system in the active site. Zn(2+) is bound by residues His-63, Glu-64, Cys-93, Cys-96, Cys-99, and Cys-107. NAD(+) contacts are provided by residues Ile-175, Asp-195, Arg-200, 262 to 264, and 286 to 287; these read LGI and IY.

The protein belongs to the zinc-containing alcohol dehydrogenase family. In terms of assembly, homotetramer. Zn(2+) is required as a cofactor.

The protein localises to the cytoplasm. The enzyme catalyses L-threonine + NAD(+) = (2S)-2-amino-3-oxobutanoate + NADH + H(+). It functions in the pathway amino-acid degradation; L-threonine degradation via oxydo-reductase pathway; glycine from L-threonine: step 1/2. Its function is as follows. Catalyzes the NAD(+)-dependent oxidation of L-threonine to 2-amino-3-ketobutyrate. The protein is L-threonine 3-dehydrogenase of Shewanella sp. (strain MR-7).